Consider the following 450-residue polypeptide: Enolase (450 aa).

Position 167 (glutamine 167) interacts with (2R)-2-phosphoglycerate. Glutamate 209 serves as the catalytic Proton donor. 3 residues coordinate Mg(2+): aspartate 250, glutamate 307, and aspartate 334. Positions 359, 388, 389, and 410 each coordinate (2R)-2-phosphoglycerate. Lysine 359 acts as the Proton acceptor in catalysis.

This sequence belongs to the enolase family. It depends on Mg(2+) as a cofactor.

The protein localises to the cytoplasm. Its subcellular location is the secreted. The protein resides in the cell surface. It carries out the reaction (2R)-2-phosphoglycerate = phosphoenolpyruvate + H2O. Its pathway is carbohydrate degradation; glycolysis; pyruvate from D-glyceraldehyde 3-phosphate: step 4/5. Its function is as follows. Catalyzes the reversible conversion of 2-phosphoglycerate (2-PG) into phosphoenolpyruvate (PEP). It is essential for the degradation of carbohydrates via glycolysis. Functionally, 'Moonlights' as a plasminogen receptor and plasmin activator. Contributes to host (pig) cell adhesion; anti-enolase antibodies decrease binding to porcine kidney cells about 60%. Binds host plasminogen and fibronectin in vitro; enhances the activity of host tissue-specific plasminogen activator (tPA), and helps plasminogen and tPA degrade articifial host extracellular matrices. This Mesomycoplasma hyorhinis (strain HUB-1) (Mycoplasma hyorhinis) protein is Enolase.